We begin with the raw amino-acid sequence, 363 residues long: S-adenosylmethionine:tRNA ribosyltransferase-isomerase (363 aa).

The protein belongs to the QueA family. In terms of assembly, monomer.

Its subcellular location is the cytoplasm. It catalyses the reaction 7-aminomethyl-7-carbaguanosine(34) in tRNA + S-adenosyl-L-methionine = epoxyqueuosine(34) in tRNA + adenine + L-methionine + 2 H(+). The protein operates within tRNA modification; tRNA-queuosine biosynthesis. Its function is as follows. Transfers and isomerizes the ribose moiety from AdoMet to the 7-aminomethyl group of 7-deazaguanine (preQ1-tRNA) to give epoxyqueuosine (oQ-tRNA). In Haemophilus influenzae (strain ATCC 51907 / DSM 11121 / KW20 / Rd), this protein is S-adenosylmethionine:tRNA ribosyltransferase-isomerase.